Consider the following 428-residue polypeptide: D-amino acid dehydrogenase (428 aa).

3–17 lines the FAD pocket; sequence VVILGSGVVGVASAY.

It belongs to the DadA oxidoreductase family. Requires FAD as cofactor.

The enzyme catalyses a D-alpha-amino acid + A + H2O = a 2-oxocarboxylate + AH2 + NH4(+). The protein operates within amino-acid degradation; D-alanine degradation; NH(3) and pyruvate from D-alanine: step 1/1. Oxidative deamination of D-amino acids. The polypeptide is D-amino acid dehydrogenase (Burkholderia cenocepacia (strain HI2424)).